A 301-amino-acid chain; its full sequence is Ribosomal RNA large subunit methyltransferase F (301 aa).

The protein belongs to the methyltransferase superfamily. METTL16/RlmF family.

Its subcellular location is the cytoplasm. The enzyme catalyses adenosine(1618) in 23S rRNA + S-adenosyl-L-methionine = N(6)-methyladenosine(1618) in 23S rRNA + S-adenosyl-L-homocysteine + H(+). Functionally, specifically methylates the adenine in position 1618 of 23S rRNA. This is Ribosomal RNA large subunit methyltransferase F from Colwellia psychrerythraea (strain 34H / ATCC BAA-681) (Vibrio psychroerythus).